Reading from the N-terminus, the 918-residue chain is MSVPPLLRPPSPLLPAAAAVAAAAAALVPGSGPAPFPAPGAAPAGGISFHLQIGLSREPVLLLQDSSGDYSLAHVREMACSIVDQKFPECGFYGLYDKILLFRHDPASDNILQLVKIASDIQEGDLIEVVLSASATFEDFQIRPHALFVHSYRAPAFCDHCGEMLWGLVRQGLKCEGCGLNYHKRCAFKIPNNCSGVRRRRLSNVSLTGLGTVRTASAEFSTSVPDEPLLSPVSPGFEQKSPSESFIGREKRSNSQSYIGRPIQLDKLLMSKVKVPHTFVIHSYTRPTVCQFCKKLLKGLFRQGLQCKDCRFNCHKRCAPKVPNNCLGEVTINGELLSPGAESDVVMEEGSDDNDSERNSGLMDDMDEAMVQDTEMALAEGQSGGAEMQDPDADQEDSNRTISPSTSNNIPLMRVVQSVKHTKRRSSTVMKEGWMVHYTSKDTLRKRHYWRLDSKCITLFQNDTGSRYYKEIPLSEILCLEPAKPSALTPVGATPHCFEITTANVVYYVGENVVNPSSSPPNNSVLPSGIGPDVARMWEVAIQHALMPVIPKGSSVGSGSNSHKDISVSISVSNCQIQENVDISTVYQIFPDEVLGSGQFGIVYGGKHRKTGRDVAIKIIDKLRFPTKQESQLRNEVAILQNLHHPGVVNLECMFETPERVFVVMEKLHGDMLEMILSSEKGRLPEHITKFLITQILVALRHLHFKNIVHCDLKPENVLLASADPFPQVKLCDFGFARIIGEKSFRRSVVGTPAYLAPEVLRNKGYNRSLDMWSVGVIIYVSLSGTFPFNEDEDIHDQIQNAAFMYPPNPWKEISHEAIDLINNLLQVKMRKRYSVDKTLSHPWLQDYQTWLDLRELECRIGERYITHESDDSRWEQYAGEQGLQYPAHLISLSASHSDSPEAEEREMKALSERVSIL.

Tyr-93 is subject to Phosphotyrosine. The Phorbol-ester/DAG-type 1 zinc-finger motif lies at 144–194 (PHALFVHSYRAPAFCDHCGEMLWGLVRQGLKCEGCGLNYHKRCAFKIPNNC). A phosphoserine mark is found at Ser-203, Ser-206, Ser-217, and Ser-221. The Phorbol-ester/DAG-type 2 zinc finger occupies 276 to 326 (PHTFVIHSYTRPTVCQFCKKLLKGLFRQGLQCKDCRFNCHKRCAPKVPNNC). 2 disordered regions span residues 338 to 362 (SPGA…NSGL) and 379 to 410 (AEGQ…SNNI). Acidic residues predominate over residues 345 to 355 (VVMEEGSDDND). Ser-351 is modified (phosphoserine). Positions 400-410 (RTISPSTSNNI) are enriched in polar residues. 2 positions are modified to phosphoserine; by MAPK13: Ser-403 and Ser-407. Residues 428–547 (TVMKEGWMVH…WEVAIQHALM (120 aa)) form the PH domain. Tyr-438 bears the Phosphotyrosine mark. Ser-454 carries the post-translational modification Phosphoserine. A Phosphotyrosine; by ABL modification is found at Tyr-469. Residue Tyr-508 is modified to Phosphotyrosine. Ser-554 is subject to Phosphoserine. One can recognise a Protein kinase domain in the interval 589-845 (IFPDEVLGSG…VDKTLSHPWL (257 aa)). Residues 595 to 603 (LGSGQFGIV) and Lys-618 each bind ATP. Asp-712 functions as the Proton acceptor in the catalytic mechanism. Position 744 is a phosphoserine; by PKC/PRKCD (Ser-744). Phosphoserine; by autocatalysis and PKC/PRKCD is present on Ser-748. The residue at position 755 (Tyr-755) is a Phosphotyrosine. Ser-916 carries the post-translational modification Phosphoserine; by autocatalysis.

The protein belongs to the protein kinase superfamily. CAMK Ser/Thr protein kinase family. PKD subfamily. Interacts (via N-terminus) with ADAP1/CENTA1. Interacts with MAPK13. Interacts with DAPK1 in an oxidative stress-regulated manner. Interacts with USP28; the interaction induces phosphorylation of USP28 and activated KRAS-mediated stabilization of ZNF304. Interacts with AKAP13 (via C-terminal domain). Requires Mg(2+) as cofactor. Post-translationally, phosphorylated at Ser-403 and Ser-407 by MAPK13 during regulation of insulin secretion in pancreatic beta cells. Phosphorylated by DAPK1. Phosphorylated at Tyr-93 and by ABL at Tyr-469, which primes the kinase in response to oxidative stress, and promotes a second step activating phosphorylation at Ser-744/Ser-748 by PKRD. Phosphorylated at Ser-916 upon S.enterica infection in macrophages.

It localises to the cytoplasm. Its subcellular location is the cell membrane. The protein resides in the golgi apparatus. It is found in the trans-Golgi network. It catalyses the reaction L-seryl-[protein] + ATP = O-phospho-L-seryl-[protein] + ADP + H(+). The catalysed reaction is L-threonyl-[protein] + ATP = O-phospho-L-threonyl-[protein] + ADP + H(+). Activated by DAG and phorbol esters. Phorbol-ester/DAG-type domain 1 binds DAG with high affinity and appears to play the dominant role in mediating translocation to the cell membrane and trans-Golgi network. Phorbol-ester/DAG-type domain 2 binds phorbol ester with higher affinity. Autophosphorylation of Ser-748 and phosphorylation of Ser-744 by PKC relieves auto-inhibition by the PH domain. Phosphorylation on Tyr-469 by the SRC-ABL1 pathway in response to oxidative stress, is also required for activation. Activated by DAPK1 under oxidative stress. In terms of biological role, serine/threonine-protein kinase that converts transient diacylglycerol (DAG) signals into prolonged physiological effects downstream of PKC, and is involved in the regulation of MAPK8/JNK1 and Ras signaling, Golgi membrane integrity and trafficking, cell survival through NF-kappa-B activation, cell migration, cell differentiation by mediating HDAC7 nuclear export, cell proliferation via MAPK1/3 (ERK1/2) signaling, and plays a role in cardiac hypertrophy, VEGFA-induced angiogenesis, genotoxic-induced apoptosis and flagellin-stimulated inflammatory response. Phosphorylates the epidermal growth factor receptor (EGFR) on dual threonine residues, which leads to the suppression of epidermal growth factor (EGF)-induced MAPK8/JNK1 activation and subsequent JUN phosphorylation. Phosphorylates RIN1, inducing RIN1 binding to 14-3-3 proteins YWHAB, YWHAE and YWHAZ and increased competition with RAF1 for binding to GTP-bound form of Ras proteins (NRAS, HRAS and KRAS). Acts downstream of the heterotrimeric G-protein beta/gamma-subunit complex to maintain the structural integrity of the Golgi membranes, and is required for protein transport along the secretory pathway. In the trans-Golgi network (TGN), regulates the fission of transport vesicles that are on their way to the plasma membrane. May act by activating the lipid kinase phosphatidylinositol 4-kinase beta (PI4KB) at the TGN for the local synthesis of phosphorylated inositol lipids, which induces a sequential production of DAG, phosphatidic acid (PA) and lyso-PA (LPA) that are necessary for membrane fission and generation of specific transport carriers to the cell surface. Under oxidative stress, is phosphorylated at Tyr-469 via SRC-ABL1 and contributes to cell survival by activating IKK complex and subsequent nuclear translocation and activation of NFKB1. Involved in cell migration by regulating integrin alpha-5/beta-3 recycling and promoting its recruitment in newly forming focal adhesion. In osteoblast differentiation, mediates the bone morphogenetic protein 2 (BMP2)-induced nuclear export of HDAC7, which results in the inhibition of HDAC7 transcriptional repression of RUNX2. In neurons, plays an important role in neuronal polarity by regulating the biogenesis of TGN-derived dendritic vesicles, and is involved in the maintenance of dendritic arborization and Golgi structure in hippocampal cells. May potentiate mitogenesis induced by the neuropeptide bombesin or vasopressin by mediating an increase in the duration of MAPK1/3 (ERK1/2) signaling, which leads to accumulation of immediate-early gene products including FOS that stimulate cell cycle progression. Plays an important role in the proliferative response induced by low calcium in keratinocytes, through sustained activation of MAPK1/3 (ERK1/2) pathway. Downstream of novel PKC signaling, plays a role in cardiac hypertrophy by phosphorylating HDAC5, which in turn triggers XPO1/CRM1-dependent nuclear export of HDAC5, MEF2A transcriptional activation and induction of downstream target genes that promote myocyte hypertrophy and pathological cardiac remodeling. Mediates cardiac troponin I (TNNI3) phosphorylation at the PKA sites, which results in reduced myofilament calcium sensitivity, and accelerated crossbridge cycling kinetics. The PRKD1-HDAC5 pathway is also involved in angiogenesis by mediating VEGFA-induced specific subset of gene expression, cell migration, and tube formation. In response to VEGFA, is necessary and required for HDAC7 phosphorylation which induces HDAC7 nuclear export and endothelial cell proliferation and migration. During apoptosis induced by cytarabine and other genotoxic agents, PRKD1 is cleaved by caspase-3 at Asp-378, resulting in activation of its kinase function and increased sensitivity of cells to the cytotoxic effects of genotoxic agents. In epithelial cells, is required for transducing flagellin-stimulated inflammatory responses by binding and phosphorylating TLR5, which contributes to MAPK14/p38 activation and production of inflammatory cytokines. Acts as an activator of NLRP3 inflammasome assembly by mediating phosphorylation of NLRP3. May play a role in inflammatory response by mediating activation of NF-kappa-B. May be involved in pain transmission by directly modulating TRPV1 receptor. Plays a role in activated KRAS-mediated stabilization of ZNF304 in colorectal cancer (CRC) cells. Regulates nuclear translocation of transcription factor TFEB in macrophages upon live S.enterica infection. This Mus musculus (Mouse) protein is Serine/threonine-protein kinase D1 (Prkd1).